A 324-amino-acid chain; its full sequence is Olfactory receptor 4K15 (324 aa).

The Extracellular segment spans residues 1 to 25 (MNETNHSRVTEFVLLGLSSSRELQP). N-linked (GlcNAc...) asparagine glycosylation is found at asparagine 2 and asparagine 5. Residues 26–49 (FLFLTFSLLYLAILLGNFLIILTV) traverse the membrane as a helical segment. Residues 50–57 (TSDSRLHT) lie on the Cytoplasmic side of the membrane. The helical transmembrane segment at 58–79 (PMYFLLANLSFIDVCVASFATP) threads the bilayer. The Extracellular segment spans residues 80-100 (KMIADFLVERKTISFDACLAQ). Cysteine 97 and cysteine 189 are joined by a disulfide. Residues 101-120 (IFFVHLFTGSEMVLLVSMAY) traverse the membrane as a helical segment. At 121–139 (DRYVAICKPLHYMTVMSRR) the chain is on the cytoplasmic side. A helical transmembrane segment spans residues 140–158 (VCVVLVLISWFVGFIHTTS). Topologically, residues 159-195 (QLAFTVNLPFCGPNKVDSFFCDLPLVTKLACIDTYVV) are extracellular. A helical transmembrane segment spans residues 196–219 (SLLIVADSGFLSLSSFLLLVVSYT). Residues 220 to 235 (VILVTVRNRSSASMAK) are Cytoplasmic-facing. Residues 236–258 (ARSTLTAHITVVTLFFGPCIFIY) traverse the membrane as a helical segment. The Extracellular portion of the chain corresponds to 259–269 (VWPFSSYSVDK). The helical transmembrane segment at 270 to 289 (VLAVFYTIFTLILNPVIYTL) threads the bilayer. The Cytoplasmic portion of the chain corresponds to 290–324 (RNKEVKAAMSKLKSRYLKPSQVSVVIRNVLFLETK).

It belongs to the G-protein coupled receptor 1 family.

The protein localises to the cell membrane. Its function is as follows. Odorant receptor. The sequence is that of Olfactory receptor 4K15 (OR4K15) from Homo sapiens (Human).